The chain runs to 227 residues: 6,7-dimethyl-8-ribityllumazine synthase, chloroplastic (227 aa).

Residues 1-71 constitute a chloroplast transit peptide; sequence MKSLASPPCL…LRSSFVQTAA (71 aa). 5-amino-6-(D-ribitylamino)uracil contacts are provided by residues Phe94, 128-130, and 152-154; these read SFE and AVI. 157–158 lines the (2S)-2-hydroxy-3-oxobutyl phosphate pocket; the sequence is DT. Residue His160 is the Proton donor of the active site. Phe185 lines the 5-amino-6-(D-ribitylamino)uracil pocket. Arg199 is a binding site for (2S)-2-hydroxy-3-oxobutyl phosphate.

This sequence belongs to the DMRL synthase family. Oligomer forming an icosahedral capsid.

Its subcellular location is the plastid. The protein resides in the chloroplast. The enzyme catalyses (2S)-2-hydroxy-3-oxobutyl phosphate + 5-amino-6-(D-ribitylamino)uracil = 6,7-dimethyl-8-(1-D-ribityl)lumazine + phosphate + 2 H2O + H(+). It functions in the pathway cofactor biosynthesis; riboflavin biosynthesis; riboflavin from 2-hydroxy-3-oxobutyl phosphate and 5-amino-6-(D-ribitylamino)uracil: step 1/2. Its function is as follows. Catalyzes the formation of 6,7-dimethyl-8-ribityllumazine by condensation of 5-amino-6-(D-ribitylamino)uracil with 3,4-dihydroxy-2-butanone 4-phosphate. This is the penultimate step in the biosynthesis of riboflavin. This Arabidopsis thaliana (Mouse-ear cress) protein is 6,7-dimethyl-8-ribityllumazine synthase, chloroplastic.